The chain runs to 771 residues: Dol-P-Glc:Glc(2)Man(9)GlcNAc(2)-PP-Dol alpha-1,2-glucosyltransferase (771 aa).

The next 7 membrane-spanning stretches (helical) occupy residues 45 to 65 (FITASGFILIYFFARSWLALV), 160 to 180 (VSFYAYHTAINIALFPVIFFF), 182 to 202 (GLYYTDVASTLVMLVAYWNHL), 221 to 241 (VVLGVAALFMRQTNVFWVVVY), 293 to 313 (VDMAWPDDWALCLLSIGIAAL), 326 to 346 (HITIMGLFAGFVAWNGGVVLG), and 357 to 377 (LPQMLYIWPFFAFFSAPLLIP). The interval 392–449 (TPTPSHTTTKDPGRSSWRFTKPSITSKKSSTTKPPQRSGPTPASSSSSSSSFSPDTNS) is disordered. Composition is skewed to low complexity over residues 411 to 426 (TKPSITSKKSSTTKPP) and 435 to 449 (SSSSSSSSFSPDTNS). A glycan (N-linked (GlcNAc...) asparagine) is linked at N448. Transmembrane regions (helical) follow at residues 469–489 (PFYLLATILLSAAIIHYNTII) and 503–525 (YIFRYTILRSSLVRLALVAAYTL). Over residues 584–593 (QKNIKDKQKE) the composition is skewed to basic and acidic residues. Residues 584–605 (QKNIKDKQKEVEEEEEEEEKED) form a disordered region. The span at 594–604 (VEEEEEEEEKE) shows a compositional bias: acidic residues. The next 2 helical transmembrane spans lie at 631–651 (TSTVLLWLLTTTLSLVTAPLV) and 656–676 (FILPWVFYRLLVPAMPVSSSL). A disordered region spans residues 682–708 (SSSFASSTTESGNGDGNDAATAARQQQ). The helical transmembrane segment at 728 to 748 (LALETVWFLAINIGTMYMFLF) threads the bilayer.

It belongs to the ALG10 glucosyltransferase family.

It localises to the endoplasmic reticulum membrane. It catalyses the reaction an alpha-D-Glc-(1-&gt;3)-alpha-D-Glc-(1-&gt;3)-alpha-D-Man-(1-&gt;2)-alpha-D-Man-(1-&gt;2)-alpha-D-Man-(1-&gt;3)-[alpha-D-Man-(1-&gt;2)-alpha-D-Man-(1-&gt;3)-[alpha-D-Man-(1-&gt;2)-alpha-D-Man-(1-&gt;6)]-alpha-D-Man-(1-&gt;6)]-beta-D-Man-(1-&gt;4)-beta-D-GlcNAc-(1-&gt;4)-alpha-D-GlcNAc-diphospho-di-trans,poly-cis-dolichol + a di-trans,poly-cis-dolichyl beta-D-glucosyl phosphate = a alpha-D-Glc-(1-&gt;2)-alpha-D-Glc-(1-&gt;3)-alpha-D-Glc-(1-&gt;3)-alpha-D-Man-(1-&gt;2)-alpha-D-Man-(1-&gt;2)-alpha-D-Man-(1-&gt;3)-[alpha-D-Man-(1-&gt;2)-alpha-D-Man-(1-&gt;3)-[alpha-D-Man-(1-&gt;2)-alpha-D-Man-(1-&gt;6)]-alpha-D-Man-(1-&gt;6)]-beta-D-Man-(1-&gt;4)-beta-D-GlcNAc-(1-&gt;4)-alpha-D-GlcNAc-diphospho-di-trans,poly-cis-dolichol + a di-trans,poly-cis-dolichyl phosphate + H(+). It functions in the pathway protein modification; protein glycosylation. Its function is as follows. Dol-P-Glc:Glc(2)Man(9)GlcNAc(2)-PP-Dol alpha-1,2-glucosyltransferase that operates in the biosynthetic pathway of dolichol-linked oligosaccharides, the glycan precursors employed in protein asparagine (N)-glycosylation. The assembly of dolichol-linked oligosaccharides begins on the cytosolic side of the endoplasmic reticulum membrane and finishes in its lumen. The sequential addition of sugars to dolichol pyrophosphate produces dolichol-linked oligosaccharides containing fourteen sugars, including two GlcNAcs, nine mannoses and three glucoses. Once assembled, the oligosaccharide is transferred from the lipid to nascent proteins by oligosaccharyltransferases. In the lumen of the endoplasmic reticulum, adds the third and last glucose residue from dolichyl phosphate glucose (Dol-P-Glc) onto the lipid-linked oligosaccharide intermediate Glc(2)Man(9)GlcNAc(2)-PP-Dol to produce Glc(3)Man(9)GlcNAc(2)-PP-Dol. In Neurospora crassa (strain ATCC 24698 / 74-OR23-1A / CBS 708.71 / DSM 1257 / FGSC 987), this protein is Dol-P-Glc:Glc(2)Man(9)GlcNAc(2)-PP-Dol alpha-1,2-glucosyltransferase (alg-10).